The chain runs to 431 residues: Enolase (431 aa).

Q166 contributes to the (2R)-2-phosphoglycerate binding site. E208 functions as the Proton donor in the catalytic mechanism. 3 residues coordinate Mg(2+): D245, E288, and D315. (2R)-2-phosphoglycerate is bound by residues K340, R369, S370, and K391. The Proton acceptor role is filled by K340.

It belongs to the enolase family. Requires Mg(2+) as cofactor.

It is found in the cytoplasm. It localises to the secreted. The protein localises to the cell surface. The enzyme catalyses (2R)-2-phosphoglycerate = phosphoenolpyruvate + H2O. Its pathway is carbohydrate degradation; glycolysis; pyruvate from D-glyceraldehyde 3-phosphate: step 4/5. Functionally, catalyzes the reversible conversion of 2-phosphoglycerate (2-PG) into phosphoenolpyruvate (PEP). It is essential for the degradation of carbohydrates via glycolysis. The chain is Enolase from Clostridium botulinum (strain Kyoto / Type A2).